Here is a 191-residue protein sequence, read N- to C-terminus: Phosphoheptose isomerase (191 aa).

In terms of domain architecture, SIS spans 37–191; that stretch reads IAESFKQDGK…IIQLIEKEME (155 aa). 52–54 contributes to the substrate binding site; that stretch reads NGG. The Zn(2+) site is built by histidine 61 and glutamate 65. Residues glutamate 65, 93 to 94, 119 to 121, serine 124, and glutamine 172 contribute to the substrate site; these read ND and STS. Zn(2+)-binding residues include glutamine 172 and histidine 180.

This sequence belongs to the SIS family. GmhA subfamily. Homotetramer. Requires Zn(2+) as cofactor.

It localises to the cytoplasm. It carries out the reaction 2 D-sedoheptulose 7-phosphate = D-glycero-alpha-D-manno-heptose 7-phosphate + D-glycero-beta-D-manno-heptose 7-phosphate. Its pathway is carbohydrate biosynthesis; D-glycero-D-manno-heptose 7-phosphate biosynthesis; D-glycero-alpha-D-manno-heptose 7-phosphate and D-glycero-beta-D-manno-heptose 7-phosphate from sedoheptulose 7-phosphate: step 1/1. It participates in bacterial outer membrane biogenesis; LPS core biosynthesis. Catalyzes the isomerization of sedoheptulose 7-phosphate in D-glycero-D-manno-heptose 7-phosphate. The protein is Phosphoheptose isomerase of Vibrio vulnificus (strain CMCP6).